Consider the following 539-residue polypeptide: Chaperonin GroEL (539 aa).

ATP is bound by residues 29 to 32, 86 to 90, Gly-413, 476 to 478, and Asp-492; these read TIGP, DGTTT, and NAA.

Belongs to the chaperonin (HSP60) family. Forms a cylinder of 14 subunits composed of two heptameric rings stacked back-to-back. Interacts with the co-chaperonin GroES.

The protein localises to the cytoplasm. The enzyme catalyses ATP + H2O + a folded polypeptide = ADP + phosphate + an unfolded polypeptide.. In terms of biological role, together with its co-chaperonin GroES, plays an essential role in assisting protein folding. The GroEL-GroES system forms a nano-cage that allows encapsulation of the non-native substrate proteins and provides a physical environment optimized to promote and accelerate protein folding. The polypeptide is Chaperonin GroEL (Pediococcus pentosaceus (strain ATCC 25745 / CCUG 21536 / LMG 10740 / 183-1w)).